Reading from the N-terminus, the 224-residue chain is Uracil-DNA glycosylase 2 (224 aa).

The active-site Proton acceptor is D64.

Belongs to the uracil-DNA glycosylase (UDG) superfamily. UNG family.

The protein resides in the cytoplasm. It catalyses the reaction Hydrolyzes single-stranded DNA or mismatched double-stranded DNA and polynucleotides, releasing free uracil.. In terms of biological role, excises uracil residues from the DNA which can arise as a result of misincorporation of dUMP residues by DNA polymerase or due to deamination of cytosine. This Listeria monocytogenes serotype 4b (strain F2365) protein is Uracil-DNA glycosylase 2.